We begin with the raw amino-acid sequence, 27 residues long: Allergen C-C (27 aa).

Belongs to the protease inhibitor I6 (cereal trypsin/alpha-amylase inhibitor) family.

The protein resides in the secreted. This is Allergen C-C from Triticum aestivum (Wheat).